Here is a 566-residue protein sequence, read N- to C-terminus: Endoglucanase B (566 aa).

The signal sequence occupies residues 1 to 30 (MKKRRSSKVILSLAIVVALLAAVEPNAALA). The active-site Proton donor is Glu-177. The active-site Nucleophile is Glu-299.

The protein belongs to the glycosyl hydrolase 5 (cellulase A) family.

The enzyme catalyses Endohydrolysis of (1-&gt;4)-beta-D-glucosidic linkages in cellulose, lichenin and cereal beta-D-glucans.. The chain is Endoglucanase B (celB) from Paenibacillus lautus (Bacillus lautus).